The following is a 198-amino-acid chain: MKRIGVFGGAFDPPHVAHAALVKAALAELQLDELRVVPTGEAWHKTRTLSPAPHRLAMAQLAFAELPHVVVDPRELERVGPSYTVDTLREFKALWPTAEFFLILGEDQAQALPSWHDWQEILQLAIICVATRACSTGAGAKFDLETTHKSRFRRLLMPALNVSATDIRARFAAHLSVADMVFEPVARYIAHHHLYQTA.

The protein belongs to the NadD family.

The enzyme catalyses nicotinate beta-D-ribonucleotide + ATP + H(+) = deamido-NAD(+) + diphosphate. It participates in cofactor biosynthesis; NAD(+) biosynthesis; deamido-NAD(+) from nicotinate D-ribonucleotide: step 1/1. Catalyzes the reversible adenylation of nicotinate mononucleotide (NaMN) to nicotinic acid adenine dinucleotide (NaAD). The chain is Probable nicotinate-nucleotide adenylyltransferase from Albidiferax ferrireducens (strain ATCC BAA-621 / DSM 15236 / T118) (Rhodoferax ferrireducens).